The following is an 88-amino-acid chain: Protein A19 homolog (88 aa).

A disordered region spans residues 1–28; sequence MADSTAGAKKRKKRSTSATSTRKEPPTV.

It belongs to the chordopoxvirinae A19 family.

The chain is Protein A19 homolog from Fowlpox virus (strain NVSL) (FPV).